We begin with the raw amino-acid sequence, 145 residues long: Large ribosomal subunit protein uL13 (145 aa).

It belongs to the universal ribosomal protein uL13 family. In terms of assembly, part of the 50S ribosomal subunit.

Functionally, this protein is one of the early assembly proteins of the 50S ribosomal subunit, although it is not seen to bind rRNA by itself. It is important during the early stages of 50S assembly. The polypeptide is Large ribosomal subunit protein uL13 (Halobacterium salinarum (strain ATCC 700922 / JCM 11081 / NRC-1) (Halobacterium halobium)).